Reading from the N-terminus, the 629-residue chain is 1-deoxy-D-xylulose-5-phosphate synthase (629 aa).

Thiamine diphosphate contacts are provided by residues H72 and 113-115 (GHA). D144 contributes to the Mg(2+) binding site. Thiamine diphosphate-binding positions include 145 to 146 (GA), N174, Y287, and E370. A Mg(2+)-binding site is contributed by N174.

Belongs to the transketolase family. DXPS subfamily. In terms of assembly, homodimer. Requires Mg(2+) as cofactor. The cofactor is thiamine diphosphate.

The enzyme catalyses D-glyceraldehyde 3-phosphate + pyruvate + H(+) = 1-deoxy-D-xylulose 5-phosphate + CO2. It participates in metabolic intermediate biosynthesis; 1-deoxy-D-xylulose 5-phosphate biosynthesis; 1-deoxy-D-xylulose 5-phosphate from D-glyceraldehyde 3-phosphate and pyruvate: step 1/1. Functionally, catalyzes the acyloin condensation reaction between C atoms 2 and 3 of pyruvate and glyceraldehyde 3-phosphate to yield 1-deoxy-D-xylulose-5-phosphate (DXP). The chain is 1-deoxy-D-xylulose-5-phosphate synthase from Prochlorococcus marinus (strain MIT 9312).